Consider the following 2391-residue polypeptide: Filaggrin-2 (2391 aa).

An S-100-like region spans residues 1-81 (MTDLLRSVVT…TEFLLMIFKL (81 aa)). EF-hand domains follow at residues 8–43 (VVTV…ELHP) and 49–84 (DDPD…LTMA). D62, D64, D66, R68, and E73 together coordinate Ca(2+). 3 disordered regions span residues 96 to 275 (ASGS…DSGR), 349 to 369 (SYSQ…CGGQ), and 406 to 2391 (NSSS…LSRH). The span at 98–107 (GSKKHRRGHR) shows a compositional bias: basic residues. The span at 111–121 (EESETEEDEED) shows a compositional bias: acidic residues. Residues 149 to 163 (GTVKCRHGSNSRRLG) are compositionally biased toward basic residues. Positions 166-176 (GNLSSSGNQEG) are enriched in polar residues. Over residues 193–209 (GKDRHGSSSVELRERIN) the composition is skewed to basic and acidic residues. Residues 245–289 (ETSGHESNSTQSRIREQKLGSSCSGSGDSGRRSHACGYSNSSGCG) form a Filaggrin 1 repeat. 2 stretches are compositionally biased toward polar residues: residues 420 to 442 (GSGS…SSGF) and 449 to 476 (SGQT…SGKT). The Filaggrin 2 repeat unit spans residues 421-466 (SGSSQSTSFEQHGTGLSQSSGFEQHVCGSGQTCGQHESTSSQSLGY). Over residues 480–507 (GQHGSGSGQSSGFGQCGSGSGQSSGFGQ) the composition is skewed to gly residues. Positions 508-562 (HGSVSGQSSGFGQHGSVSGQSSGFGQHESRSRQSSYGQHGSGSSQSSGYGQYGSR) are enriched in low complexity. Over residues 568–604 (GQHGLGSGQSTGFGQYGSGSGQSSGFGQHGSGSGQSS) the composition is skewed to gly residues. A compositionally biased stretch (low complexity) spans 605–655 (GFGQHESRSGQSSYGQHSSGSSQSSGYGQHGSRQTSGFGQHGSGSSQSTGF). A compositionally biased stretch (gly residues) spans 656–666 (GQYGSGSGQSS). Residues 667 to 734 (GFGQHVSGSG…SSGQSSSFGQ (68 aa)) show a composition bias toward low complexity. Residues 735–756 (HGSGSGQSSGFGQHGSGSGQSS) show a composition bias toward gly residues. A compositionally biased stretch (low complexity) spans 757–807 (GFGQHESRSGQSSYGQHSSGSSQSSGYGQHGSRQTSGFGQHGSGSSQSTGF). Residues 808 to 831 (GQYGSGSGQSAGFGQHGSGSGQSS) are compositionally biased toward gly residues. Residues 832–884 (GFGQHESRSHQSSYGQHGSGSSQSSGYGQHGSSSGQTSGFGQHRSSSGQYSGF) show a composition bias toward low complexity. Positions 885 to 908 (GQHGSGSGQSSGFGQHGTGSGQYS) are enriched in gly residues. Positions 918–956 (HQSSYGQHGSGSSQSSGYGQHGSSSGQTFGFGQHRSGSG) are enriched in low complexity. Residues 957–972 (QSSGFGQHGSGSGQSS) show a composition bias toward gly residues. 2 stretches are compositionally biased toward low complexity: residues 973 to 982 (GFGQHESGSG) and 994 to 1027 (SSQS…GFGQ). The stretch at 1019 to 1051 (SGQTTGFGQHRSSSGQYSGFGQHGSGSDQSSGF) is one Filaggrin 3 repeat. Residues 1052-1062 (GQHGTGSGQSS) are compositionally biased toward gly residues. A compositionally biased stretch (low complexity) spans 1063–1098 (GFGQYESRSRQSSYGQHGSGSSQSSGYGQHGSNSGQ). A Filaggrin 4 repeat occupies 1097-1141 (GQTSGFGQHRPGSGQSSGFGQYGSGSGQSSGFGQHGSGTGKSSGF). Positions 1111–1137 (QSSGFGQYGSGSGQSSGFGQHGSGTGK) are enriched in gly residues. Low complexity predominate over residues 1148-1174 (SGQSSYGQHGTGSSQSSGCGQHESGSG). Positions 1175–1198 (PTTSFGQHVSGSDNFSSSGQHISD) are enriched in polar residues. The span at 1206-1220 (GQYGSGSGQSTGLGQ) shows a compositional bias: gly residues. Residues 1226-1249 (VESGSTVHGRQETTHGQTINTTRH) are compositionally biased toward polar residues. Positions 1250–1263 (SQSGQGQSTQTGSR) are enriched in low complexity. Residue S1276 is modified to Phosphoserine. Positions 1329–1343 (HGQSTQTGSRTSGRQ) are enriched in polar residues. Over residues 1346-1355 (SHSDATDSEV) the composition is skewed to basic and acidic residues. The segment covering 1366-1377 (QEQTHSQAGSQH) has biased composition (polar residues). Residues 1378–1390 (GESESTVHERHET) are compositionally biased toward basic and acidic residues. A compositionally biased stretch (low complexity) spans 1406–1416 (HGQSTQRGSRT). Residues S1427 and S1428 each carry the phosphoserine modification. A compositionally biased stretch (polar residues) spans 1439-1459 (RPQSQEQTHGQAGSQHGESGS). Residues 1455-1510 (GESGSTVHGRHGTTHGQTGDTTRHAHYHHGKSTQRGSSTTGRRGSGHSESSDSEVH) form a Filaggrin 5 repeat. Over residues 1487-1496 (TQRGSSTTGR) the composition is skewed to low complexity. A phosphoserine mark is found at S1504 and S1505. Low complexity predominate over residues 1510 to 1529 (HSGGSHTHSGHTHGQSGSQH). Positions 1544-1559 (HGQTGDTTRHSYSGHE) are enriched in polar residues. Residues 1560 to 1572 (QTTQTGSRTTGRQ) show a composition bias toward low complexity. Composition is skewed to basic and acidic residues over residues 1575–1584 (SHSESTDSEV) and 1605–1618 (QHEE…ERHG). A Phosphoserine modification is found at S1579. A Filaggrin 6 repeat occupies 1607–1662 (EEPEFTVHERHGTTHGQIGDTTGHSHSGHGQSTQRGSRTTGRQRSSHSESSDSEVH). Low complexity predominate over residues 1627 to 1649 (TTGHSHSGHGQSTQRGSRTTGRQ). The span at 1652–1661 (SHSESSDSEV) shows a compositional bias: basic and acidic residues. Residues S1656 and S1657 each carry the phosphoserine modification. Low complexity-rich tracts occupy residues 1662–1686 (HSGV…QSES) and 1711–1720 (GLTTQTGSRT). Residues 1755-1768 (QHGESESIVHERHG) are compositionally biased toward basic and acidic residues. The Filaggrin 7 repeat unit spans residues 1757 to 1812 (GESESIVHERHGTIHGQTGDTTRHAHSGHGQSTQTGSRTTGRRSSGHSEYSDSEGH). Residues 1784 to 1795 (GHGQSTQTGSRT) are compositionally biased toward low complexity. 2 positions are modified to phosphoserine: S1800 and S1807. The span at 1834–1845 (GESESIVDERHG) shows a compositional bias: basic and acidic residues. A compositionally biased stretch (low complexity) spans 1849-1873 (GQTGDTSGHSQSGHGQSTQSGSSTT). Over residues 1879–1888 (GHSESSDSEV) the composition is skewed to basic and acidic residues. A phosphoserine mark is found at S1883, S1884, and S1959. 2 Filaggrin repeats span residues 1928–1964 (DTTE…SEGP) and 1984–2039 (PESG…SEGH). Composition is skewed to low complexity over residues 1963–1982 (GPSG…AGSH) and 2013–2022 (GQSTQRGSRT). S2034 bears the Phosphoserine mark. Composition is skewed to low complexity over residues 2039-2059 (HSGV…SQHG), 2114-2125 (HSGVSHTHSGHT), and 2162-2176 (HGQS…TGRQ). A Filaggrin 10 repeat occupies 2134–2189 (GESGSAIHGRQGTIHGQTGDTTRHGQSGHGQSTQTGSRTTGRQRSSHSESSDSEVH). Residues 2179–2190 (SHSESSDSEVHS) are compositionally biased toward basic and acidic residues. Low complexity-rich tracts occupy residues 2201-2211 (HSQAGSRHGQS), 2219-2228 (QGTTHGQTGD), and 2238-2247 (GQSTQRGSRT). Residues 2273-2288 (GHIQGQAGSQQRQPGS) show a composition bias toward polar residues. Residues 2320–2331 (SRSSRASHFQSH) show a composition bias toward low complexity. A compositionally biased stretch (polar residues) spans 2367 to 2391 (SRKSISNSHLSWSTDSTANKQLSRH).

It belongs to the S100-fused protein family. In the N-terminal section; belongs to the S-100 family. Post-translationally, deiminated by PADI1, PADI2 or PADI3 in vitro. The deiminated form is degraded by calpain-1/CAPN1 more quickly and into shorter peptides than the intact protein. In terms of processing, may be processed by calpain-1/CAPN1 in the uppermost epidermal layers. As to expression, expressed in skin, thymus, stomach and placenta, but not detected in heart, brain, liver, lung, bone marrow, small intestine, spleen, prostate, colon, adrenal gland, kidney, pancreas, mammary gland, bladder, thyroid, salivary gland and trachea. Weakly expressed in esophagus, tonsils and testis (at protein level). In the skin, strongly expressed in the upper stratum granulosum and lower stratum corneum, but not detected in the upper stratum corneum (at protein level). In scalp hair follicles, mainly restricted within the granular and cornified cells surrounding the infundibular outer root sheath, with weak expression in central and proximal outer root sheath (at protein level). Tends to be down-regulated in sporiatic lesions compared to non-lesional skin inthe same patients.

It is found in the cytoplasm. Its subcellular location is the cytoplasmic granule. Its function is as follows. Essential for normal cell-cell adhesion in the cornified cell layers. Important for proper integrity and mechanical strength of the stratum corneum of the epidermis. This is Filaggrin-2 (FLG2) from Homo sapiens (Human).